Consider the following 417-residue polypeptide: Serine hydroxymethyltransferase (417 aa).

(6S)-5,6,7,8-tetrahydrofolate-binding positions include L121 and G125 to L127. K230 carries the N6-(pyridoxal phosphate)lysine modification. Position 245 (E245) interacts with (6S)-5,6,7,8-tetrahydrofolate.

This sequence belongs to the SHMT family. In terms of assembly, homodimer. Pyridoxal 5'-phosphate serves as cofactor.

It localises to the cytoplasm. It catalyses the reaction (6R)-5,10-methylene-5,6,7,8-tetrahydrofolate + glycine + H2O = (6S)-5,6,7,8-tetrahydrofolate + L-serine. It participates in one-carbon metabolism; tetrahydrofolate interconversion. It functions in the pathway amino-acid biosynthesis; glycine biosynthesis; glycine from L-serine: step 1/1. Its function is as follows. Catalyzes the reversible interconversion of serine and glycine with tetrahydrofolate (THF) serving as the one-carbon carrier. This reaction serves as the major source of one-carbon groups required for the biosynthesis of purines, thymidylate, methionine, and other important biomolecules. Also exhibits THF-independent aldolase activity toward beta-hydroxyamino acids, producing glycine and aldehydes, via a retro-aldol mechanism. This chain is Serine hydroxymethyltransferase, found in Desulfitobacterium hafniense (strain DSM 10664 / DCB-2).